The chain runs to 655 residues: MEKVTNSAAAKPQGNNKKQESAYNGAGKDKKKPNLDIETTDSDLLSDMHLDGTTEQKVGTLFSKVFEDTDYGTGPSTSSKEAAAAKTADHERRLQAEADVNNNDAEKAGQLAKESVATQGASATERKQAFSLGLEHTSPIQVNGAALACPLVRKSLPPGEANSCPPPPKRDPAAVKSAVKIIKVKAPEEGNNNNDEKEMSTETSEPHKTDSVEEGRRVVMWIIFPIKTKFFFKYFWEQTACLVQRTNPKYFQSLISFKMLDEILIRHNLDFTVNLDVTTYKNGKRETLNPEGRALPPAVWGFYSEGCSIRLLHASAYLTRLREVCTVLQEFFHCKVGANMYLTPPNSQGFAPHYDDIEAFVIQVEGRKRWLLYDPPKEADHLARISSGNYNQEQLGKPIIDEVLSAGDVLYFPRGTVHQAITEEQQHSLHITLSVYQQQAYANLLETLMPMVLKKAVDRSVALRRGLPLHTFQILGNAYKANDCGSRQLLVENVQKLVAKYLMPSEDDIDEAVDQMAKKFQHEALPPIVLPSEEVRTVHGARSGADDQGNCVCDYKFNEKTSVRLLRANILRLVTEPDGSVRIYHHVDNGLDYCKYEPYFMEILPEKAKAVELLISAYPYYLTIDQLPLKSSARKVEVATALWEHGLLMTEKPFK.

Residues 1–16 (MEKVTNSAAAKPQGNN) are compositionally biased toward polar residues. Disordered regions lie at residues 1–48 (MEKV…LSDM) and 67–122 (EDTD…QGAS). Over residues 76–86 (STSSKEAAAAK) the composition is skewed to low complexity. A compositionally biased stretch (basic and acidic residues) spans 87–96 (TADHERRLQA). Residue S131 is modified to Phosphoserine. T137 is subject to Phosphothreonine. At S138 the chain carries Phosphoserine. Residues 185 to 210 (KAPEEGNNNNDEKEMSTETSEPHKTD) form a disordered region. Positions 194–210 (NDEKEMSTETSEPHKTD) are enriched in basic and acidic residues. One can recognise a JmjC domain in the interval 307–452 (CSIRLLHASA…NLLETLMPMV (146 aa)). 3 residues coordinate Fe cation: H353, D355, and H418.

This sequence belongs to the ROX family. NO66 subfamily. Requires Fe(2+) as cofactor.

The protein localises to the nucleus. It carries out the reaction N(6),N(6)-dimethyl-L-lysyl(36)-[histone H3] + 2 2-oxoglutarate + 2 O2 = L-lysyl(36)-[histone H3] + 2 formaldehyde + 2 succinate + 2 CO2. Its function is as follows. Oxygenase that can act as both a histone lysine demethylase and a ribosomal histidine hydroxylase. Specifically demethylates 'Lys-4' (H3K4me) and 'Lys-36' (H3K36me) of histone H3, thereby playing a central role in histone code. The sequence is that of Bifunctional lysine-specific demethylase and histidyl-hydroxylase NO66 from Drosophila sechellia (Fruit fly).